The sequence spans 335 residues: Eukaryotic translation initiation factor 3 subunit H-A (335 aa).

The MPN domain maps to 22–156 (IQVDGLVVLK…LKAYRLTPKL (135 aa)). Residues 254-272 (QQQKQQYQQRRQQENAQRQ) show a composition bias toward low complexity. Residues 254–282 (QQQKQQYQQRRQQENAQRQSRGEPPLPEE) form a disordered region.

Belongs to the eIF-3 subunit H family. As to quaternary structure, component of the eukaryotic translation initiation factor 3 (eIF-3) complex, which is composed of 13 subunits: eif3a, eif3b, eif3c, eif3d, eif3e, eif3f, eif3g, eif3h, eif3i, eif3j, eif3k, eif3l and eif3m.

Its subcellular location is the cytoplasm. Functionally, component of the eukaryotic translation initiation factor 3 (eIF-3) complex, which is involved in protein synthesis of a specialized repertoire of mRNAs and, together with other initiation factors, stimulates binding of mRNA and methionyl-tRNAi to the 40S ribosome. The eIF-3 complex specifically targets and initiates translation of a subset of mRNAs involved in cell proliferation. In Danio rerio (Zebrafish), this protein is Eukaryotic translation initiation factor 3 subunit H-A (eif3ha).